Reading from the N-terminus, the 93-residue chain is Class II hydrophobin 1 (93 aa).

Residues M1–A16 form the signal peptide. 4 cysteine pairs are disulfide-bonded: C24–C74, C35–C65, C36–C48, and C75–C86.

This sequence belongs to the cerato-ulmin hydrophobin family. Interacts with maize ubiquilin 1-like (UBL) protein. Homotetramer. Further self-assembles to form highly ordered films at water-air interfaces through intermolecular interactions.

It is found in the cell membrane. Aerial growth, conidiation, and dispersal of filamentous fungi in the environment rely upon a capability of their secreting small amphipathic proteins called hydrophobins (HPBs) with low sequence identity. Class I can self-assemble into an outermost layer of rodlet bundles on aerial cell surfaces, conferring cellular hydrophobicity that supports fungal growth, development and dispersal; whereas Class II form highly ordered films at water-air interfaces through intermolecular interactions but contribute nothing to the rodlet structure. Hyd1 is a class II hydrophobin that acts as an elicitor of induced systemic resistance (ISR) in plants. During interaction with the plant, binds with the maize target protein UBL in order to recruit more UBL proteins in maize roots to elicit plant defense responses, including cell death as well as brassinosteroid, jasmonate (JA) and ethylene (ET) signaling. The polypeptide is Class II hydrophobin 1 (Trichoderma harzianum (Hypocrea lixii)).